Reading from the N-terminus, the 313-residue chain is Peptidyl-prolyl cis-trans isomerase 9 (313 aa).

A PPIase cyclophilin-type domain is found at 9-174; it reads FLDMALDEKP…AKVRIFNSGE (166 aa). 2 stretches are compositionally biased toward basic and acidic residues: residues 216–230 and 253–269; these read EERESDFSSKTESSR and RGDRNRRTQRADRKDDF. Disordered regions lie at residues 216–274 and 288–313; these read EERE…IAVR and TPEHWRRNAPSKWQQGSYTHPVDLQP.

The protein belongs to the cyclophilin-type PPIase family.

It carries out the reaction [protein]-peptidylproline (omega=180) = [protein]-peptidylproline (omega=0). Functionally, PPIases accelerate the folding of proteins. It catalyzes the cis-trans isomerization of proline imid ic peptide bonds in oligopeptides. Thought to function as a catalyst in the folding and modification of cuticle collagens. This chain is Peptidyl-prolyl cis-trans isomerase 9, found in Caenorhabditis briggsae.